We begin with the raw amino-acid sequence, 137 residues long: Active regulator of SIRT1 (137 aa).

Arg-7 carries the post-translational modification Citrulline. Residues 14–24 (GAPEAPGAAPG) are compositionally biased toward low complexity. The segment at 14-58 (GAPEAPGAAPGHTKPSQAPMKRTRKAKATQAQKLRNSAKGKVPKS) is disordered. At Ser-84 the chain carries Phosphoserine. Positions 96–120 (RQNRGRKACDRPVTKTKKKKKAEGT) are disordered.

Belongs to the AROS family. In terms of assembly, part of the small subunit (SSU) processome, composed of more than 70 proteins and the RNA chaperone small nucleolar RNA (snoRNA) U3. Interacts with RPS19; the interaction is direct and mediates the integration of RPS19 in state post-A1. Interacts with SIRT1. In terms of processing, citrullinated by PADI4.

It is found in the nucleus. It localises to the nucleolus. In terms of biological role, part of the small subunit (SSU) processome, first precursor of the small eukaryotic ribosomal subunit. During the assembly of the SSU processome in the nucleolus, many ribosome biogenesis factors, an RNA chaperone and ribosomal proteins associate with the nascent pre-rRNA and work in concert to generate RNA folding, modifications, rearrangements and cleavage as well as targeted degradation of pre-ribosomal RNA by the RNA exosome. Acts as a chaperone that specifically mediates the integration of RPS19 in state post-A1. Direct regulator of SIRT1. Enhances SIRT1-mediated deacetylation of p53/TP53, thereby participating in inhibition of p53/TP53-mediated transcriptional activity. The protein is Active regulator of SIRT1 (RPS19BP1) of Bos taurus (Bovine).